The chain runs to 512 residues: MAIERELVLVVDFGGQYNQLIARRVREHNVYCEIIPYTTSVEDIKKKNPKAIIFTGGPNSVYGEGTPRVEKEIFELGVPVLGICYGHQLTAYTLGGKVESPDIREYGKTEVKIDNKSPLFDGIKEADQSWMSHTDYVSEIPEGFKIIATTDQCPVAAMANEEKKIYGVQFHPEVEHTLFGQKMLGNFLFKVAGLKADWSMASFAEEKIKAIKELVGDKKVLCALSGGVDSSVAAVLVHKAIGKQLTCVFVDHGLLRKDEGDQVEAIFKKQFDMNLIRVNAGERFLGKLKGVSDPETKRKIIGEEFIRVFEEEAGKLGQIDFLVQGTIYPDVVESGTNTSATIKSHHNVGGLPEDMQFSLIEPLRELFKDEVRAVGEELGIPHKLVWRQPFPGPGLAIRVLGEITEEKLEITREADAIFREEIALAGLEEKIWQYFACLPNIQSVGVMGDERTYCHTIALRAVTSSDAMTSDWARIPYEVLDKVSRRIVNEVKGVNRIVYDVTSKPPATIEWE.

Residues Leu7–Asp197 form the Glutamine amidotransferase type-1 domain. The Nucleophile role is filled by Cys84. Catalysis depends on residues His171 and Glu173. One can recognise a GMPS ATP-PPase domain in the interval Trp198–Arg387. Ser225 to Ser231 serves as a coordination point for ATP.

Homodimer.

It catalyses the reaction XMP + L-glutamine + ATP + H2O = GMP + L-glutamate + AMP + diphosphate + 2 H(+). The protein operates within purine metabolism; GMP biosynthesis; GMP from XMP (L-Gln route): step 1/1. Functionally, catalyzes the synthesis of GMP from XMP. In Clostridium novyi (strain NT), this protein is GMP synthase [glutamine-hydrolyzing].